The chain runs to 85 residues: Depressant scorpion toxin BmKIM (85 aa).

An N-terminal signal peptide occupies residues Met-1–Ala-21. Residues Asp-22–Gly-82 form the LCN-type CS-alpha/beta domain. 4 disulfide bridges follow: Cys-31/Cys-81, Cys-35/Cys-56, Cys-42/Cys-63, and Cys-46/Cys-65. Gly-82 carries the glycine amide modification.

This sequence belongs to the long (4 C-C) scorpion toxin superfamily. Sodium channel inhibitor family. As to expression, expressed by the venom gland.

It localises to the secreted. Causes a slow progressive depressant flaccid paralysis, when injected into S.falculata blowfly larvae. Inhibits dose-dependently the total sodium (Nav) currents both in dorsal root ganglia neurons and in ventricular myocytes. Is toxic to mice by intravenous injection, but not by subcutaneous or intracerebroventricular injection. Produces antiarrhythmia in rat. Is then active on both mammals and insects. This is Depressant scorpion toxin BmKIM (KIM2) from Olivierus martensii (Manchurian scorpion).